A 2183-amino-acid chain; its full sequence is Genome polyprotein (2183 aa).

The N-myristoyl glycine; by host moiety is linked to residue Gly-2. The Cytoplasmic portion of the chain corresponds to 2-1493 (GAQVSTQKTG…HVSRAFICLQ (1492 aa)). The interval 566–582 (FYQGPTEESVERAMGRV) is amphipathic alpha-helix. Active-site for protease 2A activity residues include His-870 and Asp-888. Zn(2+) contacts are provided by Cys-905 and Cys-907. Catalysis depends on Cys-959, which acts as the For protease 2A activity. 2 residues coordinate Zn(2+): Cys-965 and His-967. Residues 1099–1171 (NNGWLKKFTE…EQSAPSQSDQ (73 aa)) form a membrane-binding region. An oligomerization region spans residues 1099–1237 (NNGWLKKFTE…SPGAGKSVAT (139 aa)). An RNA-binding region spans residues 1120-1124 (AVKIQ). One can recognise an SF3 helicase domain in the interval 1203–1359 (EKKMSNYIQF…SMYSQNGKIN (157 aa)). 3 residues coordinate Zn(2+): Cys-1367, Cys-1379, and Cys-1384. A C4-type; degenerate zinc finger spans residues 1367 to 1384 (CDEECCPVNFKRCCPLVC). Positions 1411-1418 (EYNHRHSV) are RNA-binding. The segment at 1422–1427 (LEALFQ) is oligomerization. Residues 1494–1509 (ALTTFVSVAGIIYIIY) lie within the membrane without spanning it. Residues 1510-2183 (KLFAGFQGAY…TLRRKWLDSF (674 aa)) lie on the Cytoplasmic side of the membrane. Tyr-1519 carries the O-(5'-phospho-RNA)-tyrosine modification. The Peptidase C3 domain maps to 1539–1717 (GPAFEFAVAM…FSAGLLKHYF (179 aa)). Active-site for protease 3C activity residues include His-1578, Glu-1609, and Cys-1685. The RdRp catalytic domain occupies 1948-2064 (GHLIAFDYSG…SYPWPIDASL (117 aa)). Mg(2+) contacts are provided by Asp-1954 and Asp-2050.

This sequence belongs to the picornaviruses polyprotein family. As to quaternary structure, interacts with capsid protein VP1 and capsid protein VP3 to form heterotrimeric protomers. In terms of assembly, interacts with capsid protein VP0, and capsid protein VP3 to form heterotrimeric protomers. Five protomers subsequently associate to form pentamers which serve as building blocks for the capsid. Interacts with capsid protein VP2, capsid protein VP3 and capsid protein VP4 following cleavage of capsid protein VP0. Interacts with host CXADR. Interacts with capsid protein VP1 and capsid protein VP3 in the mature capsid. As to quaternary structure, interacts with capsid protein VP0 and capsid protein VP1 to form heterotrimeric protomers. Five protomers subsequently associate to form pentamers which serve as building blocks for the capsid. Interacts with capsid protein VP4 in the mature capsid. Interacts with protein 2C; this interaction may be important for virion morphogenesis. In terms of assembly, interacts with capsid protein VP1 and capsid protein VP3. Homodimer. As to quaternary structure, homohexamer; forms a hexameric ring structure with 6-fold symmetry characteristic of AAA+ ATPases. Interacts (via N-terminus) with host RTN3 (via reticulon domain); this interaction is important for viral replication. Interacts with capsid protein VP3; this interaction may be important for virion morphogenesis. In terms of assembly, interacts with protein 3CD. Homodimer. Interacts with host GBF1. Interacts (via GOLD domain) with host ACBD3 (via GOLD domain); this interaction allows the formation of a viral protein 3A/ACBD3 heterotetramer with a 2:2 stoichiometry, which will stimulate the recruitment of host PI4KB in order to synthesize PI4P at the viral RNA replication sites. As to quaternary structure, interacts with RNA-directed RNA polymerase. In terms of assembly, interacts with protein 3AB and with RNA-directed RNA polymerase. Interacts with Viral protein genome-linked and with protein 3CD. It depends on Mg(2+) as a cofactor. Post-translationally, specific enzymatic cleavages in vivo by the viral proteases yield processing intermediates and the mature proteins. Myristoylation is required for the formation of pentamers during virus assembly. Further assembly of 12 pentamers and a molecule of genomic RNA generates the provirion. In terms of processing, during virion maturation, immature virions are rendered infectious following cleavage of VP0 into VP4 and VP2. This maturation seems to be an autocatalytic event triggered by the presence of RNA in the capsid and it is followed by a conformational change infectious virion. Post-translationally, myristoylation is required during RNA encapsidation and formation of the mature virus particle. VPg is uridylylated by the polymerase into VPg-pUpU. This acts as a nucleotide-peptide primer for the genomic RNA replication.

The protein resides in the virion. It localises to the host cytoplasm. The protein localises to the host cytoplasmic vesicle membrane. It is found in the host nucleus. The catalysed reaction is a ribonucleoside 5'-triphosphate + H2O = a ribonucleoside 5'-diphosphate + phosphate + H(+). It catalyses the reaction Selective cleavage of Tyr-|-Gly bond in the picornavirus polyprotein.. The enzyme catalyses RNA(n) + a ribonucleoside 5'-triphosphate = RNA(n+1) + diphosphate. It carries out the reaction Selective cleavage of Gln-|-Gly bond in the poliovirus polyprotein. In other picornavirus reactions Glu may be substituted for Gln, and Ser or Thr for Gly.. Replication or transcription is subject to high level of random mutations by the nucleotide analog ribavirin. Its function is as follows. Forms an icosahedral capsid of pseudo T=3 symmetry with capsid proteins VP2 and VP3. The capsid is 300 Angstroms in diameter, composed of 60 copies of each capsid protein and enclosing the viral positive strand RNA genome. Capsid protein VP1 mainly forms the vertices of the capsid. Capsid protein VP1 interacts with host CXADR to provide virion attachment to target host cells. This attachment induces virion internalization. Tyrosine kinases are probably involved in the entry process. After binding to its receptor, the capsid undergoes conformational changes. Capsid protein VP1 N-terminus (that contains an amphipathic alpha-helix) and capsid protein VP4 are externalized. Together, they shape a pore in the host membrane through which viral genome is translocated to host cell cytoplasm. Functionally, forms an icosahedral capsid of pseudo T=3 symmetry with capsid proteins VP2 and VP3. The capsid is 300 Angstroms in diameter, composed of 60 copies of each capsid protein and enclosing the viral positive strand RNA genome. Lies on the inner surface of the capsid shell. After binding to the host receptor, the capsid undergoes conformational changes. Capsid protein VP4 is released, Capsid protein VP1 N-terminus is externalized, and together, they shape a pore in the host membrane through which the viral genome is translocated into the host cell cytoplasm. In terms of biological role, component of immature procapsids, which is cleaved into capsid proteins VP4 and VP2 after maturation. Allows the capsid to remain inactive before the maturation step. Its function is as follows. Cysteine protease that cleaves viral polyprotein and specific host proteins. It is responsible for the autocatalytic cleavage between the P1 and P2 regions, which is the first cleavage occurring in the polyprotein. Also cleaves the host translation initiation factor EIF4G1, in order to shut down the capped cellular mRNA translation. Inhibits the host nucleus-cytoplasm protein and RNA trafficking by cleaving host members of the nuclear pores. Counteracts stress granule formation probably by antagonizing its assembly or promoting its dissassembly. Cleaves and inhibits host IFIH1/MDA5, thereby inhibiting the type-I IFN production and the establishment of the antiviral state. Cleaves and inhibits host MAVS, thereby inhibiting the type-I IFN production and the establishment of the antiviral state. Functionally, plays an essential role in the virus replication cycle by acting as a viroporin. Creates a pore in the host endoplasmic reticulum and as a consequence releases Ca2+ in the cytoplasm of infected cell. In turn, high levels of cytoplasmic calcium may trigger membrane trafficking and transport of viral ER-associated proteins to viroplasms, sites of viral genome replication. Induces and associates with structural rearrangements of intracellular membranes. Displays RNA-binding, nucleotide binding and NTPase activities. May play a role in virion morphogenesis and viral RNA encapsidation by interacting with the capsid protein VP3. In terms of biological role, localizes the viral replication complex to the surface of membranous vesicles. Together with protein 3CD binds the Cis-Active RNA Element (CRE) which is involved in RNA synthesis initiation. Acts as a cofactor to stimulate the activity of 3D polymerase, maybe through a nucleid acid chaperone activity. Its function is as follows. Localizes the viral replication complex to the surface of membranous vesicles. It inhibits host cell endoplasmic reticulum-to-Golgi apparatus transport and causes the disassembly of the Golgi complex, possibly through GBF1 interaction. This would result in depletion of MHC, trail receptors and IFN receptors at the host cell surface. Plays an essential role in viral RNA replication by recruiting ACBD3 and PI4KB at the viral replication sites, thereby allowing the formation of the rearranged membranous structures where viral replication takes place. Functionally, acts as a primer for viral RNA replication and remains covalently bound to viral genomic RNA. VPg is uridylylated prior to priming replication into VPg-pUpU. The oriI viral genomic sequence may act as a template for this. The VPg-pUpU is then used as primer on the genomic RNA poly(A) by the RNA-dependent RNA polymerase to replicate the viral genome. During genome replication, the VPg-RNA linkage is removed by the host TDP2, thereby accelerating replication. During the late stage of the replication cycle, host TDP2 is excluded from sites of viral RNA synthesis and encapsidation, allowing for the generation of progeny virions. Involved in the viral replication complex and viral polypeptide maturation. It exhibits protease activity with a specificity and catalytic efficiency that is different from protease 3C. Protein 3CD lacks polymerase activity. Protein 3CD binds to the 5'UTR of the viral genome. In terms of biological role, replicates the viral genomic RNA on the surface of intracellular membranes. May form linear arrays of subunits that propagate along a strong head-to-tail interaction called interface-I. Covalently attaches UMP to a tyrosine of VPg, which is used to prime RNA synthesis. The positive stranded RNA genome is first replicated at virus induced membranous vesicles, creating a dsRNA genomic replication form. This dsRNA is then used as template to synthesize positive stranded RNA genomes. ss(+)RNA genomes are either translated, replicated or encapsidated. Its function is as follows. Major viral protease that mediates proteolytic processing of the polyprotein. Cleaves host EIF5B, contributing to host translation shutoff. Also cleaves host PABPC1, contributing to host translation shutoff. Cleaves host NLRP1, triggers host N-glycine-mediated degradation of the autoinhibitory NLRP1 N-terminal fragment. This chain is Genome polyprotein, found in Coxsackievirus B4 (strain JVB / Benschoten / New York/51).